We begin with the raw amino-acid sequence, 333 residues long: MQHNQLLEQLYSGHSLSTSESTALFNAVIQGELSNEQIAAMLIALKVREANTEEIAGAVAASLQNAKVFPRPDYPFADIVGTGGDGQNTINISTASAIVAASMGAKVAKHGNRSVSSKSGASDVLTALGVNVNVTPEQARQALDEIGVCFLFAQQYHSGFRHVAPVRAALKTHTIFNILGPLINPARPTYHLLGVYAPELVKTYAETAVALEHQHSFVVHGSGLDEVALHGETQVAEIKNGKIEYFTLTPEDFGLKTQSLESLRGGEPQKNAQYLTALLQGKGKAEHANTVAANTALLLKLFGYDDLKQNVQNVLAHLLSGKAFETLQKLTTY.

Residues Gly-81, 84–85, Thr-89, 91–94, 109–117, and Ala-121 contribute to the 5-phospho-alpha-D-ribose 1-diphosphate site; these read GD, NIST, and KHGNRSVSS. Residue Gly-81 coordinates anthranilate. Residue Ser-93 coordinates Mg(2+). Position 112 (Asn-112) interacts with anthranilate. Arg-167 contacts anthranilate. The Mg(2+) site is built by Asp-225 and Glu-226.

Belongs to the anthranilate phosphoribosyltransferase family. In terms of assembly, homodimer. Requires Mg(2+) as cofactor.

The catalysed reaction is N-(5-phospho-beta-D-ribosyl)anthranilate + diphosphate = 5-phospho-alpha-D-ribose 1-diphosphate + anthranilate. The protein operates within amino-acid biosynthesis; L-tryptophan biosynthesis; L-tryptophan from chorismate: step 2/5. Its function is as follows. Catalyzes the transfer of the phosphoribosyl group of 5-phosphorylribose-1-pyrophosphate (PRPP) to anthranilate to yield N-(5'-phosphoribosyl)-anthranilate (PRA). This Haemophilus influenzae (strain PittGG) protein is Anthranilate phosphoribosyltransferase.